Here is a 595-residue protein sequence, read N- to C-terminus: UvrABC system protein C (595 aa).

The GIY-YIG domain maps to 14–91 (DSPGCYIHKD…IQENKPKYNI (78 aa)). In terms of domain architecture, UVR spans 196-231 (DKIVNELRDKMTKASELMEFERAAEYRDLIEGIGLL).

It belongs to the UvrC family. As to quaternary structure, interacts with UvrB in an incision complex.

Its subcellular location is the cytoplasm. Functionally, the UvrABC repair system catalyzes the recognition and processing of DNA lesions. UvrC both incises the 5' and 3' sides of the lesion. The N-terminal half is responsible for the 3' incision and the C-terminal half is responsible for the 5' incision. This is UvrABC system protein C from Streptococcus mutans serotype c (strain ATCC 700610 / UA159).